We begin with the raw amino-acid sequence, 196 residues long: Holliday junction branch migration complex subunit RuvA (196 aa).

Residues 1–63 are domain I; that stretch reads MIASVRGEVI…EDSMTLYGFA (63 aa). The segment at 64–142 is domain II; the sequence is DADARDLFGT…PVTTGAGVTA (79 aa). Positions 143–151 are flexible linker; that stretch reads VGGHAVRGP. Residues 151-196 are domain III; that stretch reads PVVEALVGLGFAAKQAEEACDKVLAADPDATTSSALRAALSMLGKK.

It belongs to the RuvA family. As to quaternary structure, homotetramer. Forms an RuvA(8)-RuvB(12)-Holliday junction (HJ) complex. HJ DNA is sandwiched between 2 RuvA tetramers; dsDNA enters through RuvA and exits via RuvB. An RuvB hexamer assembles on each DNA strand where it exits the tetramer. Each RuvB hexamer is contacted by two RuvA subunits (via domain III) on 2 adjacent RuvB subunits; this complex drives branch migration. In the full resolvosome a probable DNA-RuvA(4)-RuvB(12)-RuvC(2) complex forms which resolves the HJ.

It is found in the cytoplasm. In terms of biological role, the RuvA-RuvB-RuvC complex processes Holliday junction (HJ) DNA during genetic recombination and DNA repair, while the RuvA-RuvB complex plays an important role in the rescue of blocked DNA replication forks via replication fork reversal (RFR). RuvA specifically binds to HJ cruciform DNA, conferring on it an open structure. The RuvB hexamer acts as an ATP-dependent pump, pulling dsDNA into and through the RuvAB complex. HJ branch migration allows RuvC to scan DNA until it finds its consensus sequence, where it cleaves and resolves the cruciform DNA. This Mycobacterium sp. (strain JLS) protein is Holliday junction branch migration complex subunit RuvA.